An 87-amino-acid chain; its full sequence is Phosphoribosyl-ATP pyrophosphatase (87 aa).

Belongs to the PRA-PH family.

The protein resides in the cytoplasm. It catalyses the reaction 1-(5-phospho-beta-D-ribosyl)-ATP + H2O = 1-(5-phospho-beta-D-ribosyl)-5'-AMP + diphosphate + H(+). Its pathway is amino-acid biosynthesis; L-histidine biosynthesis; L-histidine from 5-phospho-alpha-D-ribose 1-diphosphate: step 2/9. The sequence is that of Phosphoribosyl-ATP pyrophosphatase from Paenarthrobacter aurescens (strain TC1).